The primary structure comprises 191 residues: MGQGNSKLSSDDIKKIMSKTNYTSEQVSQILKDYQSVNQDSKGLSLEEFKSFFSIRFKDYDDASILHMFKIFDSDKNGRISFKEFVGALFIITKSPVSDKLSFLFDMFDRDLNGYLDLEESYNILKLALNTSVGLGFDVSQAGSFAEGLLNSMNRNSHGGITKEEFIKKASVNDTFVRMLCLYQSYDTLLY.

G2 is lipidated: N-myristoyl glycine. EF-hand domains are found at residues 25-59 (EQVS…RFKD), 60-95 (YDDA…ITKS), and 96-131 (PVSD…ALNT). Residues D73, D75, N77, R79, and E84 each contribute to the Ca(2+) site.

The protein belongs to the recoverin family.

The protein is Calcium-binding protein L (cbpL) of Dictyostelium discoideum (Social amoeba).